The primary structure comprises 311 residues: Porphobilinogen deaminase (311 aa).

C242 bears the S-(dipyrrolylmethanemethyl)cysteine mark.

The protein belongs to the HMBS family. In terms of assembly, monomer. It depends on dipyrromethane as a cofactor.

It carries out the reaction 4 porphobilinogen + H2O = hydroxymethylbilane + 4 NH4(+). It functions in the pathway porphyrin-containing compound metabolism; protoporphyrin-IX biosynthesis; coproporphyrinogen-III from 5-aminolevulinate: step 2/4. In terms of biological role, tetrapolymerization of the monopyrrole PBG into the hydroxymethylbilane pre-uroporphyrinogen in several discrete steps. This chain is Porphobilinogen deaminase, found in Hahella chejuensis (strain KCTC 2396).